Reading from the N-terminus, the 502-residue chain is Glycerol kinase (502 aa).

Residue Thr-14 participates in ADP binding. ATP contacts are provided by Thr-14, Thr-15, and Ser-16. Thr-14 contacts sn-glycerol 3-phosphate. Position 18 (Arg-18) interacts with ADP. 3 residues coordinate sn-glycerol 3-phosphate: Arg-84, Glu-85, and Tyr-136. Arg-84, Glu-85, and Tyr-136 together coordinate glycerol. His-232 carries the phosphohistidine; by HPr modification. Residue Asp-246 coordinates sn-glycerol 3-phosphate. 2 residues coordinate glycerol: Asp-246 and Gln-247. Positions 268 and 311 each coordinate ADP. The ATP site is built by Thr-268, Gly-311, Gln-315, and Gly-412. The ADP site is built by Gly-412 and Asn-416.

This sequence belongs to the FGGY kinase family. In terms of assembly, homotetramer and homodimer (in equilibrium). The phosphoenolpyruvate-dependent sugar phosphotransferase system (PTS), including enzyme I, and histidine-containing protein (HPr) are required for the phosphorylation, which leads to the activation of the enzyme.

It carries out the reaction glycerol + ATP = sn-glycerol 3-phosphate + ADP + H(+). It functions in the pathway polyol metabolism; glycerol degradation via glycerol kinase pathway; sn-glycerol 3-phosphate from glycerol: step 1/1. Its activity is regulated as follows. Activated by phosphorylation and inhibited by fructose 1,6-bisphosphate (FBP). Functionally, key enzyme in the regulation of glycerol uptake and metabolism. Catalyzes the phosphorylation of glycerol to yield sn-glycerol 3-phosphate. In Streptococcus pneumoniae serotype 19F (strain G54), this protein is Glycerol kinase.